Here is a 926-residue protein sequence, read N- to C-terminus: Alanine--tRNA ligase (926 aa).

Zn(2+) is bound by residues histidine 577, histidine 581, cysteine 680, and histidine 684.

It belongs to the class-II aminoacyl-tRNA synthetase family. Zn(2+) serves as cofactor.

The protein resides in the cytoplasm. It catalyses the reaction tRNA(Ala) + L-alanine + ATP = L-alanyl-tRNA(Ala) + AMP + diphosphate. Functionally, catalyzes the attachment of alanine to tRNA(Ala) in a two-step reaction: alanine is first activated by ATP to form Ala-AMP and then transferred to the acceptor end of tRNA(Ala). Also edits incorrectly charged Ser-tRNA(Ala) and Gly-tRNA(Ala) via its editing domain. This chain is Alanine--tRNA ligase, found in Methylacidiphilum infernorum (isolate V4) (Methylokorus infernorum (strain V4)).